Consider the following 61-residue polypeptide: Large ribosomal subunit protein uL30 (61 aa).

It belongs to the universal ribosomal protein uL30 family. In terms of assembly, part of the 50S ribosomal subunit.

The protein is Large ribosomal subunit protein uL30 of Chlorobium phaeobacteroides (strain DSM 266 / SMG 266 / 2430).